We begin with the raw amino-acid sequence, 143 residues long: FAM161 homolog famh-136 (143 aa).

The protein belongs to the FAM136 family.

Its subcellular location is the cytoplasm. May play a role in locomotion and behavior. The sequence is that of FAM161 homolog famh-136 from Caenorhabditis elegans.